The sequence spans 78 residues: Probable [Fe-S]-dependent transcriptional repressor (78 aa).

Residues cysteine 56, cysteine 61, cysteine 64, and cysteine 70 each coordinate iron-sulfur cluster.

Belongs to the FeoC family.

In terms of biological role, may function as a transcriptional regulator that controls feoABC expression. The chain is Probable [Fe-S]-dependent transcriptional repressor from Cronobacter sakazakii (strain ATCC BAA-894) (Enterobacter sakazakii).